The sequence spans 163 residues: Beta-lactoglobulin-2 (163 aa).

2 disulfide bridges follow: Cys66/Cys161 and Cys106/Cys120.

Belongs to the calycin superfamily. Lipocalin family. Monomer.

Its subcellular location is the secreted. Functionally, lactoglobulin is the primary component of whey, it binds retinol and is probably involved in the transport of that molecule. This Equus asinus (Donkey) protein is Beta-lactoglobulin-2 (LGB2).